The sequence spans 369 residues: DNA replication and repair protein RecF (369 aa).

30-37 contributes to the ATP binding site; that stretch reads GDNAQGKT.

It belongs to the RecF family.

It localises to the cytoplasm. The RecF protein is involved in DNA metabolism; it is required for DNA replication and normal SOS inducibility. RecF binds preferentially to single-stranded, linear DNA. It also seems to bind ATP. The sequence is that of DNA replication and repair protein RecF from Streptococcus equi subsp. zooepidemicus (strain MGCS10565).